The chain runs to 822 residues: Coiled-coil domain-containing protein 175 (822 aa).

Coiled-coil stretches lie at residues 129 to 164 (IIEI…EVLG), 223 to 397 (IEKQ…KQMM), and 510 to 537 (HLIE…IEEL).

This Mus musculus (Mouse) protein is Coiled-coil domain-containing protein 175 (Ccdc175).